Reading from the N-terminus, the 672-residue chain is Tubulin--tyrosine ligase-like protein 12 (672 aa).

A TTL domain is found at 332–670 (KIKIFLQIFA…LDEIDPTKVT (339 aa)). Residues 480–483 (CEYI), lysine 499, and aspartate 501 contribute to the ATP site.

Belongs to the tubulin--tyrosine ligase family.

Regulates microtubule dynamics in uterine muscle cells. In Caenorhabditis briggsae, this protein is Tubulin--tyrosine ligase-like protein 12.